The following is a 283-amino-acid chain: Pantothenate synthetase (283 aa).

Position 34-41 (34-41) interacts with ATP; the sequence is MGALHDGH. Catalysis depends on histidine 41, which acts as the Proton donor. A (R)-pantoate-binding site is contributed by glutamine 65. Residue glutamine 65 coordinates beta-alanine. Residue 152-155 coordinates ATP; sequence GSKD. Glutamine 158 provides a ligand contact to (R)-pantoate. ATP contacts are provided by residues valine 181 and 189-192; that span reads MSSR.

This sequence belongs to the pantothenate synthetase family. As to quaternary structure, homodimer.

The protein localises to the cytoplasm. It carries out the reaction (R)-pantoate + beta-alanine + ATP = (R)-pantothenate + AMP + diphosphate + H(+). Its pathway is cofactor biosynthesis; (R)-pantothenate biosynthesis; (R)-pantothenate from (R)-pantoate and beta-alanine: step 1/1. Functionally, catalyzes the condensation of pantoate with beta-alanine in an ATP-dependent reaction via a pantoyl-adenylate intermediate. This chain is Pantothenate synthetase, found in Rhodopseudomonas palustris (strain ATCC BAA-98 / CGA009).